The following is a 338-amino-acid chain: ATPase GET3 (338 aa).

Residue 33 to 40 (KGGVGKTT) participates in ATP binding. Aspartate 62 is a catalytic residue. Residues glutamate 242 and asparagine 269 each coordinate ATP. Cysteine 280 and cysteine 283 together coordinate Zn(2+).

It belongs to the arsA ATPase family. In terms of assembly, homodimer.

Its subcellular location is the cytoplasm. The protein resides in the endoplasmic reticulum. Functionally, ATPase required for the post-translational delivery of tail-anchored (TA) proteins to the endoplasmic reticulum. Recognizes and selectively binds the transmembrane domain of TA proteins in the cytosol. This complex then targets to the endoplasmic reticulum by membrane-bound receptors, where the tail-anchored protein is released for insertion. This process is regulated by ATP binding and hydrolysis. ATP binding drives the homodimer towards the closed dimer state, facilitating recognition of newly synthesized TA membrane proteins. ATP hydrolysis is required for insertion. Subsequently, the homodimer reverts towards the open dimer state, lowering its affinity for the membrane-bound receptor, and returning it to the cytosol to initiate a new round of targeting. This chain is ATPase GET3, found in Uncinocarpus reesii (strain UAMH 1704).